The sequence spans 372 residues: D-alanine--D-alanine ligase (372 aa).

In terms of domain architecture, ATP-grasp spans 145-349 (KTVLRAGGIP…CPNLLDQLIE (205 aa)). Residue 176–231 (DRWGTSELFVKAVSLGSSVATLPVKTETEFTKAVKEVFRYDDRLMVEPRIRGREIE) coordinates ATP. Positions 303, 316, and 318 each coordinate Mg(2+).

It belongs to the D-alanine--D-alanine ligase family. Mg(2+) serves as cofactor. The cofactor is Mn(2+).

Its subcellular location is the cytoplasm. It carries out the reaction 2 D-alanine + ATP = D-alanyl-D-alanine + ADP + phosphate + H(+). Its pathway is cell wall biogenesis; peptidoglycan biosynthesis. In terms of biological role, cell wall formation. The sequence is that of D-alanine--D-alanine ligase from Coxiella burnetii (strain Dugway 5J108-111).